Here is a 306-residue protein sequence, read N- to C-terminus: Ethylmalonyl-CoA decarboxylase (306 aa).

Lys-216 is modified (N6-acetyllysine; alternate). Lys-216 is modified (N6-succinyllysine; alternate).

The protein belongs to the enoyl-CoA hydratase/isomerase family.

It localises to the cytoplasm. Its subcellular location is the cytosol. It carries out the reaction (2S)-ethylmalonyl-CoA + H(+) = butanoyl-CoA + CO2. It catalyses the reaction (S)-methylmalonyl-CoA + H(+) = propanoyl-CoA + CO2. The enzyme catalyses (2R)-ethylmalonyl-CoA + H(+) = butanoyl-CoA + CO2. Its function is as follows. Decarboxylates ethylmalonyl-CoA, a potentially toxic metabolite, to form butyryl-CoA, suggesting it might be involved in metabolite proofreading. Acts preferentially on (S)-ethylmalonyl-CoA but also has some activity on the (R)-isomer. Also has methylmalonyl-CoA decarboxylase activity at lower level. This chain is Ethylmalonyl-CoA decarboxylase (ECHDC1), found in Bos taurus (Bovine).